Consider the following 339-residue polypeptide: Photosystem II assembly lipoprotein Ycf48 (339 aa).

The signal sequence occupies residues 1-22 (MVIVKSWQKIFTLLVVLLLCIG). Cysteine 23 is lipidated: N-palmitoyl cysteine. Cysteine 23 is lipidated: S-diacylglycerol cysteine.

It belongs to the Ycf48 family. Part of early PSII assembly complexes which includes D1 (psbA) and PsbI; not found in mature PSII. Binds to the lumenal side of PSII complexes. Interacts with YidC.

It is found in the cellular thylakoid membrane. Its function is as follows. A factor required for optimal assembly of photosystem II (PSII), acting in the early stages of PSII assembly. Also plays a role in replacement of photodamaged D1 (psbA). Assists YidC in synthesis of chlorophyll-binding proteins. This chain is Photosystem II assembly lipoprotein Ycf48, found in Nostoc sp. (strain PCC 7120 / SAG 25.82 / UTEX 2576).